Here is a 370-residue protein sequence, read N- to C-terminus: 3-dehydroquinate synthase (370 aa).

Residues 112–116 (GVVGD), 136–137 (TS), lysine 149, lysine 158, and 176–179 (TLRT) contribute to the NAD(+) site. 3 residues coordinate Zn(2+): glutamate 191, histidine 254, and histidine 276.

Belongs to the sugar phosphate cyclases superfamily. Dehydroquinate synthase family. Co(2+) serves as cofactor. Requires Zn(2+) as cofactor. It depends on NAD(+) as a cofactor.

The protein localises to the cytoplasm. The enzyme catalyses 7-phospho-2-dehydro-3-deoxy-D-arabino-heptonate = 3-dehydroquinate + phosphate. It participates in metabolic intermediate biosynthesis; chorismate biosynthesis; chorismate from D-erythrose 4-phosphate and phosphoenolpyruvate: step 2/7. In terms of biological role, catalyzes the conversion of 3-deoxy-D-arabino-heptulosonate 7-phosphate (DAHP) to dehydroquinate (DHQ). The polypeptide is 3-dehydroquinate synthase (Xanthomonas oryzae pv. oryzae (strain PXO99A)).